Here is a 582-residue protein sequence, read N- to C-terminus: Two-component response regulator ORR26 (582 aa).

The 116-residue stretch at 11–126 folds into the Response regulatory domain; the sequence is RVLVVDDDPT…ELRNIWQHVY (116 aa). Position 62 is a 4-aspartylphosphate (Asp-62). Positions 166–182 are enriched in basic and acidic residues; the sequence is SDTMRKRKDVDKDHADQ. A disordered region spans residues 166–187; it reads SDTMRKRKDVDKDHADQESSDG. Residues 189-248 constitute a DNA-binding region (myb-like GARP); it reads TVKKARVVWSVDLHQKFVNAVNQIGFDKVGPKKILDLMNVPGLTRENVASHLQKYRLYLS.

The protein belongs to the ARR family. Type-B subfamily. Two-component system major event consists of a His-to-Asp phosphorelay between a sensor histidine kinase (HK) and a response regulator (RR). In plants, the His-to-Asp phosphorelay involves an additional intermediate named Histidine-containing phosphotransfer protein (HPt). This multistep phosphorelay consists of a His-Asp-His-Asp sequential transfer of a phosphate group between first a His and an Asp of the HK protein, followed by the transfer to a conserved His of the HPt protein and finally the transfer to an Asp in the receiver domain of the RR protein.

The protein resides in the nucleus. Functionally, transcriptional activator that binds specific DNA sequence. Functions as a response regulator involved in His-to-Asp phosphorelay signal transduction system. Phosphorylation of the Asp residue in the receiver domain activates the ability of the protein to promote the transcription of target genes. May directly activate some type-A response regulators in response to cytokinins. This chain is Two-component response regulator ORR26, found in Oryza sativa subsp. japonica (Rice).